The chain runs to 464 residues: ATP synthase subunit beta (464 aa).

154-161 (GGAGVGKT) serves as a coordination point for ATP.

The protein belongs to the ATPase alpha/beta chains family. In terms of assembly, F-type ATPases have 2 components, CF(1) - the catalytic core - and CF(0) - the membrane proton channel. CF(1) has five subunits: alpha(3), beta(3), gamma(1), delta(1), epsilon(1). CF(0) has three main subunits: a(1), b(2) and c(9-12). The alpha and beta chains form an alternating ring which encloses part of the gamma chain. CF(1) is attached to CF(0) by a central stalk formed by the gamma and epsilon chains, while a peripheral stalk is formed by the delta and b chains.

Its subcellular location is the cell membrane. The catalysed reaction is ATP + H2O + 4 H(+)(in) = ADP + phosphate + 5 H(+)(out). Its function is as follows. Produces ATP from ADP in the presence of a proton gradient across the membrane. The catalytic sites are hosted primarily by the beta subunits. The chain is ATP synthase subunit beta from Mycoplasmopsis synoviae (strain 53) (Mycoplasma synoviae).